Consider the following 93-residue polypeptide: Small ribosomal subunit protein bS6 (93 aa).

Belongs to the bacterial ribosomal protein bS6 family.

Its function is as follows. Binds together with bS18 to 16S ribosomal RNA. This chain is Small ribosomal subunit protein bS6 (rpsF), found in Treponema pallidum (strain Nichols).